Here is an 86-residue protein sequence, read N- to C-terminus: Sodium channel neurotoxin MeuNaTxalpha-4 (86 aa).

Positions 1–19 (MNYLILISFALLVITGVES) are cleaved as a signal peptide. One can recognise an LCN-type CS-alpha/beta domain in the interval 21-85 (RDAYIAKPHN…VPIRIPGKCH (65 aa)). Intrachain disulfides connect C31-C84, C35-C57, C43-C67, and C47-C69. A propeptide (removed by a carboxypeptidase) is located at residue R86.

This sequence belongs to the long (4 C-C) scorpion toxin superfamily. Sodium channel inhibitor family. Alpha subfamily. Expressed by the venom gland.

It localises to the secreted. Alpha toxins bind voltage-independently at site-3 of sodium channels (Nav) and inhibit the inactivation of the activated channels, thereby blocking neuronal transmission. This toxin inhibits inactivation of drosophila DmNav1 (EC(50)=130 nM). This is Sodium channel neurotoxin MeuNaTxalpha-4 from Mesobuthus eupeus (Lesser Asian scorpion).